The chain runs to 177 residues: ATP synthase subunit delta (177 aa).

This sequence belongs to the ATPase delta chain family. F-type ATPases have 2 components, F(1) - the catalytic core - and F(0) - the membrane proton channel. F(1) has five subunits: alpha(3), beta(3), gamma(1), delta(1), epsilon(1). F(0) has three main subunits: a(1), b(2) and c(10-14). The alpha and beta chains form an alternating ring which encloses part of the gamma chain. F(1) is attached to F(0) by a central stalk formed by the gamma and epsilon chains, while a peripheral stalk is formed by the delta and b chains.

It localises to the cell inner membrane. Functionally, f(1)F(0) ATP synthase produces ATP from ADP in the presence of a proton or sodium gradient. F-type ATPases consist of two structural domains, F(1) containing the extramembraneous catalytic core and F(0) containing the membrane proton channel, linked together by a central stalk and a peripheral stalk. During catalysis, ATP synthesis in the catalytic domain of F(1) is coupled via a rotary mechanism of the central stalk subunits to proton translocation. In terms of biological role, this protein is part of the stalk that links CF(0) to CF(1). It either transmits conformational changes from CF(0) to CF(1) or is implicated in proton conduction. The sequence is that of ATP synthase subunit delta from Flavobacterium johnsoniae (strain ATCC 17061 / DSM 2064 / JCM 8514 / BCRC 14874 / CCUG 350202 / NBRC 14942 / NCIMB 11054 / UW101) (Cytophaga johnsonae).